Reading from the N-terminus, the 201-residue chain is Imidazole glycerol phosphate synthase subunit HisH 1 (201 aa).

The Glutamine amidotransferase type-1 domain maps to 1-201 (MIALIDYKAG…LKLLENFIRL (201 aa)). Residue Cys80 is the Nucleophile of the active site. Residues His183 and Glu185 contribute to the active site.

In terms of assembly, heterodimer of HisH and HisF.

It is found in the cytoplasm. It catalyses the reaction 5-[(5-phospho-1-deoxy-D-ribulos-1-ylimino)methylamino]-1-(5-phospho-beta-D-ribosyl)imidazole-4-carboxamide + L-glutamine = D-erythro-1-(imidazol-4-yl)glycerol 3-phosphate + 5-amino-1-(5-phospho-beta-D-ribosyl)imidazole-4-carboxamide + L-glutamate + H(+). The catalysed reaction is L-glutamine + H2O = L-glutamate + NH4(+). It functions in the pathway amino-acid biosynthesis; L-histidine biosynthesis; L-histidine from 5-phospho-alpha-D-ribose 1-diphosphate: step 5/9. Functionally, IGPS catalyzes the conversion of PRFAR and glutamine to IGP, AICAR and glutamate. The HisH subunit provides the glutamine amidotransferase activity that produces the ammonia necessary to HisF for the synthesis of IGP and AICAR. This is Imidazole glycerol phosphate synthase subunit HisH 1 from Campylobacter jejuni (strain RM1221).